Consider the following 229-residue polypeptide: Ion-translocating oxidoreductase complex subunit E (229 aa).

Transmembrane regions (helical) follow at residues 58 to 78 (LGLGLATLLVLTITNTIISLF), 82 to 102 (IPHDIRIPIYVMIIATAVTTI), 105 to 125 (LMNAFAFPVYQSLGIFVPLIV), 147 to 167 (AFDGFAMGLGMTLSLVVLGAI), and 201 to 221 (GLLLAILPPGAFIGLGLILAV).

The protein belongs to the NqrDE/RnfAE family. In terms of assembly, the complex is composed of six subunits: RnfA, RnfB, RnfC, RnfD, RnfE and RnfG.

It is found in the cell inner membrane. Its function is as follows. Part of a membrane-bound complex that couples electron transfer with translocation of ions across the membrane. In Glaesserella parasuis serovar 5 (strain SH0165) (Haemophilus parasuis), this protein is Ion-translocating oxidoreductase complex subunit E.